The primary structure comprises 500 residues: Taxoid 7-beta-hydroxylase (500 aa).

A helical membrane pass occupies residues 24–44 (PAILSTALTAIAGIIVLLVIT). Residue cysteine 446 coordinates heme.

It belongs to the cytochrome P450 family.

Its subcellular location is the microsome membrane. The enzyme catalyses taxusin + reduced [NADPH--hemoprotein reductase] + O2 = 7beta-hydroxytaxusin + oxidized [NADPH--hemoprotein reductase] + H2O + H(+). It catalyses the reaction 2alpha-hydroxytaxusin + reduced [NADPH--hemoprotein reductase] + O2 = 2alpha,7beta-dihydroxytaxusin + oxidized [NADPH--hemoprotein reductase] + H2O + H(+). It carries out the reaction 7beta-hydroxytaxusin + reduced [NADPH--hemoprotein reductase] + O2 = 2alpha,7beta-dihydroxytaxusin + oxidized [NADPH--hemoprotein reductase] + H2O + H(+). The protein operates within alkaloid biosynthesis; taxol biosynthesis. Functionally, catalyzes the conversion of taxusin to 7-beta-hydroxytaxusin in taxol biosynthesis. Catalyzes the conversion of 2-alpha-hydroxytaxusin to 2-alpha-7-beta-hydroxytaxusin in taxol biosynthesis. The protein is Taxoid 7-beta-hydroxylase of Taxus cuspidata (Japanese yew).